The following is a 393-amino-acid chain: Bifunctional enzyme Fae/Hps (393 aa).

Residues 1–161 (MYLIGEALVG…HEKDRAAHAV (161 aa)) form a formaldehyde-activating enzyme region. The active-site Proton donor is the H17. Substrate-binding residues include D19, L48, K66, T68, and Q83. The segment at 162–393 (MGFKVQRLWD…IDQFRIMTDF (232 aa)) is 3-hexulose-6-phosphate synthase.

The protein in the N-terminal section; belongs to the formaldehyde-activating enzyme family. It in the C-terminal section; belongs to the HPS/KGPDC family. HPS subfamily.

The enzyme catalyses 5,6,7,8-tetrahydromethanopterin + formaldehyde = 5,10-methylenetetrahydromethanopterin + H2O. It catalyses the reaction D-ribulose 5-phosphate + formaldehyde = D-arabino-hex-3-ulose 6-phosphate. The protein operates within carbohydrate biosynthesis; D-ribose 5-phosphate biosynthesis. Its function is as follows. Catalyzes the condensation of formaldehyde with tetrahydromethanopterin (H(4)MPT) to 5,10-methylenetetrahydromethanopterin. In terms of biological role, catalyzes the reversible formation of ribulose-5-phosphate and formaldehyde from 3-hexulose-6-phosphate. The sequence is that of Bifunctional enzyme Fae/Hps from Methanoculleus marisnigri (strain ATCC 35101 / DSM 1498 / JR1).